The chain runs to 338 residues: Acyl-CoA-binding domain-containing protein 1 (338 aa).

The helical; Signal-anchor transmembrane segment at 11–31 (IIFGLIFAYLLAKLISILLAF) threads the bilayer. N-linked (GlcNAc...) asparagine glycosylation is found at Asn35 and Asn41. The segment at 69-89 (AEQGSLRGDEDESDDDDWEGV) is disordered. Acidic residues predominate over residues 77–89 (DEDESDDDDWEGV). The 91-residue stretch at 94-184 (LDEAFSAATA…VTQLYPAWVE (91 aa)) folds into the ACB domain. Residues 126 to 130 (YGLYK), Lys152, and Tyr171 each bind an acyl-CoA. N-linked (GlcNAc...) asparagine glycosylation occurs at Asn191. ANK repeat units follow at residues 217–246 (LKID…PVNA), 250–279 (EGRT…DVNA), 283–312 (EGQT…DTTI), and 316–338 (DGNS…KDSN).

It belongs to the ACBP family. As to quaternary structure, interacts with RAP2-12. Binds to SMO1-1 and SMO1-2. Post-translationally, glycosylated. In seeds, localized in the outer integument. In terms of tissue distribution, expressed at low levels in roots, stems, leaves, flowers, and siliques, especially within seeds.

It localises to the cell membrane. It is found in the secreted. Its subcellular location is the cell wall. The protein resides in the endoplasmic reticulum membrane. Binds medium- and long-chain acyl-CoA esters with very high affinity. Can interact in vitro with arachidonyl-CoA, barely with oleoyl-CoA, but not with palmitoyl-CoA. Confers tolerance and binds to lead ions Pb(2+), probably by promoting lead translocation from roots to shoots. May function as an intracellular carrier of acyl-CoA esters. Modulates negatively sterol synthesis during embryogenesis and gametophytes development via interactions with SMO1-1 and SMO1-2; sterols serve as lipid modulators for gene expression of homeodomain-leucine zipper IV transcription factors. This Arabidopsis thaliana (Mouse-ear cress) protein is Acyl-CoA-binding domain-containing protein 1.